The primary structure comprises 274 residues: Orotidine 5'-phosphate decarboxylase (274 aa).

Catalysis depends on Lys-96, which acts as the Proton donor.

It belongs to the OMP decarboxylase family. Type 2 subfamily.

It catalyses the reaction orotidine 5'-phosphate + H(+) = UMP + CO2. It participates in pyrimidine metabolism; UMP biosynthesis via de novo pathway; UMP from orotate: step 2/2. The chain is Orotidine 5'-phosphate decarboxylase from Bacteroides fragilis (strain ATCC 25285 / DSM 2151 / CCUG 4856 / JCM 11019 / LMG 10263 / NCTC 9343 / Onslow / VPI 2553 / EN-2).